A 405-amino-acid polypeptide reads, in one-letter code: GTPase Obg (405 aa).

Residues 1 to 159 form the Obg domain; that stretch reads MKFVDEVSIF…RDLKLELKVL (159 aa). Residues 127-148 form a disordered region; that stretch reads NTRFKSSTNRAPRQTTPGKPGD. Over residues 129-143 the composition is skewed to polar residues; that stretch reads RFKSSTNRAPRQTTP. Positions 160 to 333 constitute an OBG-type G domain; sequence ADVGLLGLPN…LSQAIMRYLD (174 aa). Residues 166–173, 191–195, 213–216, 283–286, and 314–316 each bind GTP; these read GLPNAGKS, FTTLV, DIPG, NKAD, and SAL. Positions 173 and 193 each coordinate Mg(2+). Positions 373–405 are disordered; that stretch reads LRRAGVKSVEEADDDDFDDDDDDEGGAEIIYVR. Positions 383–398 are enriched in acidic residues; sequence EADDDDFDDDDDDEGG.

It belongs to the TRAFAC class OBG-HflX-like GTPase superfamily. OBG GTPase family. In terms of assembly, monomer. Mg(2+) serves as cofactor.

The protein resides in the cytoplasm. Functionally, an essential GTPase which binds GTP, GDP and possibly (p)ppGpp with moderate affinity, with high nucleotide exchange rates and a fairly low GTP hydrolysis rate. Plays a role in control of the cell cycle, stress response, ribosome biogenesis and in those bacteria that undergo differentiation, in morphogenesis control. The chain is GTPase Obg from Stutzerimonas stutzeri (strain A1501) (Pseudomonas stutzeri).